The following is a 93-amino-acid chain: Pyrimidine/purine nucleoside phosphorylase (93 aa).

Belongs to the nucleoside phosphorylase PpnP family.

It carries out the reaction a purine D-ribonucleoside + phosphate = a purine nucleobase + alpha-D-ribose 1-phosphate. The catalysed reaction is adenosine + phosphate = alpha-D-ribose 1-phosphate + adenine. The enzyme catalyses cytidine + phosphate = cytosine + alpha-D-ribose 1-phosphate. It catalyses the reaction guanosine + phosphate = alpha-D-ribose 1-phosphate + guanine. It carries out the reaction inosine + phosphate = alpha-D-ribose 1-phosphate + hypoxanthine. The catalysed reaction is thymidine + phosphate = 2-deoxy-alpha-D-ribose 1-phosphate + thymine. The enzyme catalyses uridine + phosphate = alpha-D-ribose 1-phosphate + uracil. It catalyses the reaction xanthosine + phosphate = alpha-D-ribose 1-phosphate + xanthine. Its function is as follows. Catalyzes the phosphorolysis of diverse nucleosides, yielding D-ribose 1-phosphate and the respective free bases. Can use uridine, adenosine, guanosine, cytidine, thymidine, inosine and xanthosine as substrates. Also catalyzes the reverse reactions. This is Pyrimidine/purine nucleoside phosphorylase from Pseudoalteromonas atlantica (strain T6c / ATCC BAA-1087).